A 152-amino-acid chain; its full sequence is Urease accessory protein UreE (152 aa).

The protein belongs to the UreE family.

Its subcellular location is the cytoplasm. Functionally, involved in urease metallocenter assembly. Binds nickel. Probably functions as a nickel donor during metallocenter assembly. The polypeptide is Urease accessory protein UreE (Psychromonas ingrahamii (strain DSM 17664 / CCUG 51855 / 37)).